We begin with the raw amino-acid sequence, 129 residues long: Small ribosomal subunit protein uS11 (129 aa).

Belongs to the universal ribosomal protein uS11 family. In terms of assembly, part of the 30S ribosomal subunit. Interacts with proteins S7 and S18. Binds to IF-3.

Functionally, located on the platform of the 30S subunit, it bridges several disparate RNA helices of the 16S rRNA. Forms part of the Shine-Dalgarno cleft in the 70S ribosome. This chain is Small ribosomal subunit protein uS11, found in Staphylococcus epidermidis (strain ATCC 12228 / FDA PCI 1200).